Here is a 347-residue protein sequence, read N- to C-terminus: Gas vesicle ATPase GvpN (347 aa).

Residues 1-50 (MTNSSRERKVRGSQIRTSRREKQDKNARNRTEKELTRLENHQTHRTKNGT) form a disordered region. Positions 18–42 (SRREKQDKNARNRTEKELTRLENHQ) are enriched in basic and acidic residues. 91–98 (GPTGCGKT) contributes to the ATP binding site.

The protein belongs to the CbbQ/NirQ/NorQ/GpvN family. Forms homodimers, a GvpN-GvpO heterodimer, interacts with GvpC and GvpL, might interact with GvpA.

It is found in the gas vesicle. The protein localises to the cytoplasm. It carries out the reaction ATP + H2O = ADP + phosphate + H(+). In terms of biological role, an ATPase that functions in gas vesicle formation. A minor component of the gas vesicle, also found in soluble extracts. Gas vesicles are hollow, gas filled proteinaceous nanostructures found in some microorganisms. They allow positioning of halobacteria at the optimal depth for growth in the poorly aerated, shallow brine pools of their habitat. Its function is as follows. Expression of a 9.5 kb mc-vac DNA fragment containing 2 divergently transcribed regions (gvpD-gvpE-gvpF-gvpG-gvpH-gvpI-gvpJ-gvpK-gvpL-gvpM and gvpA-gvpC-gvpN-gvpO) allows H.volcanii to produce gas vesicles. The protein is Gas vesicle ATPase GvpN of Haloferax mediterranei (strain ATCC 33500 / DSM 1411 / JCM 8866 / NBRC 14739 / NCIMB 2177 / R-4) (Halobacterium mediterranei).